The primary structure comprises 193 residues: Putative manganese efflux pump MntP (193 aa).

Helical transmembrane passes span 3–23, 39–59, 65–85, 113–133, 138–158, and 173–193; these read LATLTVLGFSLSADAFAAALG, VGAYFGAFEAAAPLIGWALGL, IAAFDHWVAFTLLAGVGGHMV, LALAALATSIDATAVGIGLAV, ILMACALIGAITTVVAAGGVL, and VLGGLALIGIGLKILIEHLSA.

This sequence belongs to the MntP (TC 9.B.29) family.

The protein resides in the cell inner membrane. Probably functions as a manganese efflux pump. In Rhodospirillum rubrum (strain ATCC 11170 / ATH 1.1.1 / DSM 467 / LMG 4362 / NCIMB 8255 / S1), this protein is Putative manganese efflux pump MntP.